A 251-amino-acid polypeptide reads, in one-letter code: GTP cyclohydrolase 1 type 2 homolog (251 aa).

Positions 64, 65, 102, 219, and 223 each coordinate a divalent metal cation.

Belongs to the GTP cyclohydrolase I type 2/NIF3 family. In terms of assembly, homohexamer.

This is GTP cyclohydrolase 1 type 2 homolog from Chlamydia muridarum (strain MoPn / Nigg).